We begin with the raw amino-acid sequence, 1447 residues long: Sister chromatid cohesion protein PDS5 homolog B (1447 aa).

The HEAT repeat unit spans residues 383 to 419 (LLVNDHLLNFVRERTLDKRWRVRKEAMMGLAQIYKKY). A disordered region spans residues 1117-1447 (KSFFTPGKPK…RRRSAKRERR (331 aa)). An N6-acetyllysine modification is found at lysine 1136. The span at 1137 to 1155 (PLSSAGKQSQTKSSRMETV) shows a compositional bias: polar residues. 6 positions are modified to phosphoserine: serine 1140, serine 1162, serine 1166, serine 1176, serine 1182, and serine 1191. A compositionally biased stretch (low complexity) spans 1156–1167 (SNASSSSNPSSP). Residues 1172-1184 (GRLDSSEMDHSEN) are compositionally biased toward basic and acidic residues. Composition is skewed to basic and acidic residues over residues 1196–1214 (KKSD…LEKP) and 1225–1243 (QEEK…EQKP). A compositionally biased stretch (basic residues) spans 1245–1254 (GSQRSRKRGH). The a.T hook 1 DNA-binding region spans 1249–1261 (SRKRGHTASESDE). Phosphothreonine is present on threonine 1255. 2 positions are modified to phosphoserine: serine 1257 and serine 1259. Residues 1265-1274 (PEEKRLKEDI) are compositionally biased toward basic and acidic residues. The residue at position 1283 (serine 1283) is a Phosphoserine. The a.T hook 2 DNA-binding region spans 1287-1299 (KGKRGRPPKPLGG). Residues 1310–1319 (TSKKGSKKKS) are compositionally biased toward basic residues. Residues serine 1319 and serine 1334 each carry the phosphoserine modification. Positions 1342–1353 (KSKQHRVSRRAQ) are enriched in basic residues. Residues 1355–1372 (RAESPESSAIESTQSTPQ) are compositionally biased toward polar residues. Serine 1358 and serine 1366 each carry phosphoserine. Residue threonine 1367 is modified to Phosphothreonine. The residue at position 1369 (serine 1369) is a Phosphoserine. Phosphothreonine occurs at positions 1370 and 1381. The a.T hook 3 DNA-binding region spans 1372–1384 (QKGRGRPSKTPSP). The segment covering 1379 to 1388 (SKTPSPSQPK) has biased composition (low complexity). Phosphoserine occurs at positions 1383 and 1417. The span at 1422–1432 (IPQEETEEEEV) shows a compositional bias: acidic residues. The span at 1437 to 1447 (VRRRSAKRERR) shows a compositional bias: basic residues.

The protein belongs to the PDS5 family. In terms of assembly, interacts with the cohesin complex. Interacts with RAD21; the interaction is direct. Interacts with WAPL (via FGF motifs) or CDCA5 (via the FGF motif); the interaction is direct, cohesin-dependent and competitive. Widely expressed.

The protein resides in the nucleus. Regulator of sister chromatid cohesion in mitosis which may stabilize cohesin complex association with chromatin. May couple sister chromatid cohesion during mitosis to DNA replication. Cohesion ensures that chromosome partitioning is accurate in both meiotic and mitotic cells and plays an important role in DNA repair. Plays a role in androgen-induced proliferative arrest in prostate cells. This Homo sapiens (Human) protein is Sister chromatid cohesion protein PDS5 homolog B (PDS5B).